Reading from the N-terminus, the 150-residue chain is Avidin-related protein 4/5 (150 aa).

The first 24 residues, 1-24 (MVHTTSPLLLLLLLSLALVAPSLS), serve as a signal peptide directing secretion. One can recognise an Avidin-like domain in the interval 26–147 (RKCSLTGKWT…GYNNFTRLCT (122 aa)). Cysteines 28 and 105 form a disulfide. Residues Asn-36, Ser-40, Tyr-57, Thr-59, and Asp-63 each contribute to the biotin site. N-linked (GlcNAc...) asparagine glycans are attached at residues Asn-67 and Asn-93. Ser-95 and Asn-140 together coordinate biotin. Asn-141 carries an N-linked (GlcNAc...) asparagine glycan.

It belongs to the avidin/streptavidin family. As to quaternary structure, homotetramer.

The protein localises to the secreted. In terms of biological role, forms a strong non-covalent specific complex with biotin. In Gallus gallus (Chicken), this protein is Avidin-related protein 4/5 (AVR4).